The chain runs to 394 residues: MVLSASEEIANSQPSGNGKTSLDIKQNEGNPQFNPRNLWPDIIKCPKNEWTFEYTDIIKRLGTDEEKIQLTKKRMEKCLMYFHKLRKEMKLFDHTYTAACILFYRYWYKYDLPPTIPQCIHLAQAILVTACKTMENNRPTDHYIKATCDFMMKDGPSPTGQKLNVEKLKWEVRDQLVSYEKKVLCQLGFDLDIDNPKELIEEIFSGYYRHVRDTDIDASLREIFPVILQEARNFIIQTGTQPISLLCDGYTLVALALIFAGVTFQKNKEPGFSFPHNFFRRRFPVIITSEIIASLFSHYQQLEKAFFDLKSNKNSALSITVDEIDKVIDEDRQLDPEPFNPYDYDIIKEGEVNEELLNYTERKIEELSNRIMSERSIKRPSEPPAEQATKKPRF.

Disordered regions lie at residues 1 to 32 and 372 to 394; these read MVLSASEEIANSQPSGNGKTSLDIKQNEGNPQ and MSERSIKRPSEPPAEQATKKPRF. Positions 9-32 are enriched in polar residues; it reads IANSQPSGNGKTSLDIKQNEGNPQ. The segment covering 372–381 has biased composition (basic and acidic residues); that stretch reads MSERSIKRPS.

As to quaternary structure, belongs to the BUR kinase complex.

Its subcellular location is the nucleus. Functionally, component of the BUR kinase complex involved in transcription regulation. This complex phosphorylates the UBC2/RAD6 ubiquitin-conjugating enzyme (E2), leading to monoubiquitination of histone H2B and the silencing of telomeric-associated genes. Also required for histone H3 methylation. Necessary for the recovery from pheromone-induced growth arrest in the cell cycle G1 phase. The kinase activity of the complex requires the presence of BUR2. Overexpression of BUR2 interferes with mitotic chromosome segregation. This is Protein BUR2 (BUR2) from Kluyveromyces lactis (strain ATCC 8585 / CBS 2359 / DSM 70799 / NBRC 1267 / NRRL Y-1140 / WM37) (Yeast).